Here is a 295-residue protein sequence, read N- to C-terminus: UDP-N-acetylenolpyruvoylglucosamine reductase (295 aa).

In terms of domain architecture, FAD-binding PCMH-type spans 26–189; sequence VGGRADVLFK…VEAEFKGVNS (164 aa). Arg-169 is an active-site residue. Cys-218 functions as the Proton donor in the catalytic mechanism. Glu-288 is an active-site residue.

The protein belongs to the MurB family. Requires FAD as cofactor.

It is found in the cytoplasm. It catalyses the reaction UDP-N-acetyl-alpha-D-muramate + NADP(+) = UDP-N-acetyl-3-O-(1-carboxyvinyl)-alpha-D-glucosamine + NADPH + H(+). The protein operates within cell wall biogenesis; peptidoglycan biosynthesis. Functionally, cell wall formation. The chain is UDP-N-acetylenolpyruvoylglucosamine reductase from Wolbachia pipientis wMel.